Here is a 710-residue protein sequence, read N- to C-terminus: Interferon-induced GTP-binding protein Mx2 (710 aa).

The segment at 1 to 51 is disordered; it reads MSMSFRPLKYKRHTQTSTQHHPKQDIYFHQQPPGPPLGQTMSPPQWQVEES. Positions 39–50 are enriched in polar residues; the sequence is QTMSPPQWQVEE. In terms of domain architecture, Dynamin-type G spans 112–383; that stretch reads DLALPAIAVI…LIWHINKSLP (272 aa). The interval 122 to 129 is G1 motif; the sequence is GDQSSGKS. 122 to 129 serves as a coordination point for GTP; that stretch reads GDQSSGKS. Positions 147 to 149 are G2 motif; it reads ITR. The interval 221 to 224 is G3 motif; the sequence is DLPG. GTP contacts are provided by residues 221 to 225 and 290 to 293; these read DLPGI and TKPD. The interval 290 to 293 is G4 motif; that stretch reads TKPD. The segment at 322–325 is G5 motif; it reads KCRG. The region spanning 619-710 is the GED domain; sequence IVEIGVHLNA…ALYEFPHFKG (92 aa).

Belongs to the TRAFAC class dynamin-like GTPase superfamily. Dynamin/Fzo/YdjA family.

The protein localises to the cytoplasm. The protein resides in the nucleus. Functionally, interferon-induced dynamin-like GTPase with antiviral activity against vesicular stomatitis virus (VSV). In Bos taurus (Bovine), this protein is Interferon-induced GTP-binding protein Mx2 (MX2).